The primary structure comprises 449 residues: Na(+)-translocating NADH-quinone reductase subunit A (449 aa).

Belongs to the NqrA family. Composed of six subunits; NqrA, NqrB, NqrC, NqrD, NqrE and NqrF.

It carries out the reaction a ubiquinone + n Na(+)(in) + NADH + H(+) = a ubiquinol + n Na(+)(out) + NAD(+). Its function is as follows. NQR complex catalyzes the reduction of ubiquinone-1 to ubiquinol by two successive reactions, coupled with the transport of Na(+) ions from the cytoplasm to the periplasm. NqrA to NqrE are probably involved in the second step, the conversion of ubisemiquinone to ubiquinol. This Actinobacillus pleuropneumoniae serotype 3 (strain JL03) protein is Na(+)-translocating NADH-quinone reductase subunit A.